The sequence spans 889 residues: Serine/threonine-protein kinase D3 (889 aa).

Phosphoserine occurs at positions 27, 37, 41, and 44. The Phorbol-ester/DAG-type 1 zinc finger occupies 154 to 204 (PHALYVHSYKAPTFCDYCGEMLWGLVRQGLKCEGCGLNYHKRCAFKIPNNC). Residues S213 and S216 each carry the phosphoserine modification. Residues 271-321 (PHTFAVHSYGRPTICQYCKRLLKGLFRQGMQCKDCKFNCHKRCASKVPRDC) form a Phorbol-ester/DAG-type 2 zinc finger. Positions 336–370 (TDADMPMDIDSSDVNSDGSRGLDDSEEPSPPEDKM) are disordered. Phosphoserine occurs at positions 346, 391, and 395. In terms of domain architecture, PH spans 416–532 (TVVKEGWMVH…WEKAIRQALM (117 aa)). A Phosphotyrosine modification is found at Y426. Phosphoserine is present on S442. Y457 carries the post-translational modification Phosphotyrosine. T535 is subject to Phosphothreonine. S539 is modified (phosphoserine). A Protein kinase domain is found at 575 to 831 (IFADEVLGSG…VDKSLSHPWL (257 aa)). ATP is bound by residues 581–589 (LGSGQFGIV) and K604. D698 acts as the Proton acceptor in catalysis. S730 bears the Phosphoserine; by PKC mark. S734 carries the phosphoserine; by autocatalysis modification. Residue Y741 is modified to Phosphotyrosine.

Belongs to the protein kinase superfamily. CAMK Ser/Thr protein kinase family. PKD subfamily. It depends on Mg(2+) as a cofactor.

The protein resides in the cytoplasm. It is found in the membrane. It catalyses the reaction L-seryl-[protein] + ATP = O-phospho-L-seryl-[protein] + ADP + H(+). The catalysed reaction is L-threonyl-[protein] + ATP = O-phospho-L-threonyl-[protein] + ADP + H(+). With respect to regulation, activated by DAG and phorbol esters. Phorbol-ester/DAG-type domains 1 and 2 bind both DAG and phorbol ester with high affinity and mediate translocation to the cell membrane. Autophosphorylation of Ser-734 and phosphorylation of Ser-730 by PKC relieves auto-inhibition by the PH domain. Functionally, converts transient diacylglycerol (DAG) signals into prolonged physiological effects, downstream of PKC. Involved in resistance to oxidative stress. The polypeptide is Serine/threonine-protein kinase D3 (Prkd3) (Mus musculus (Mouse)).